A 251-amino-acid chain; its full sequence is CDP-diacylglycerol pyrophosphatase (251 aa).

The helical transmembrane segment at 4 to 24 (AGLLFLVMIVIAVVATGIGYW) threads the bilayer.

The protein belongs to the Cdh family.

Its subcellular location is the cell inner membrane. The catalysed reaction is a CDP-1,2-diacyl-sn-glycerol + H2O = a 1,2-diacyl-sn-glycero-3-phosphate + CMP + 2 H(+). The protein operates within phospholipid metabolism; CDP-diacylglycerol degradation; phosphatidate from CDP-diacylglycerol: step 1/1. This Escherichia coli O45:K1 (strain S88 / ExPEC) protein is CDP-diacylglycerol pyrophosphatase.